The primary structure comprises 288 residues: Probable ketoamine kinase PM0587 (288 aa).

Residue 92–94 (EAL) participates in ATP binding.

The protein belongs to the fructosamine kinase family.

Its function is as follows. Ketoamine kinase that phosphorylates ketoamines on the third carbon of the sugar moiety to generate ketoamine 3-phosphate. This is Probable ketoamine kinase PM0587 from Pasteurella multocida (strain Pm70).